Here is a 269-residue protein sequence, read N- to C-terminus: Protein tio (269 aa).

Positions 1 to 12 are enriched in basic and acidic residues; sequence MANEPQEHEEGK. The segment at 1-127 is disordered; that stretch reads MANEPQEHEE…NETKCPDEQN (127 aa). Residues 1–246 lie on the Cytoplasmic side of the membrane; it reads MANEPQEHEE…VEKKLTCVIC (246 aa). Residues 27–41 are compositionally biased toward pro residues; sequence PNIPQDPTPGTPPGP. Over residues 61-74 the composition is skewed to low complexity; that stretch reads SEGPPDGSGNSSPP. Polar residues-rich tracts occupy residues 91–101 and 114–127; these read SESGGNNSAPN and AGNGNETKCPDEQN. A Phosphotyrosine; by host LCK modification is found at Tyr-136. The interval 158 to 167 is CSKH/LBD2; that stretch reads EEERSPFNKY. Positions 186-195 are SH3B/LBD1; that stretch reads IPPPQLPPRP. The helical transmembrane segment at 247 to 267 threads the bilayer; sequence LLIGILVLLILLFMLGFLFLL. Residues 268–269 are Extracellular-facing; sequence MK.

In terms of assembly, homodimer. Binds SH3 domain of host LYN, HCK, LCK, SRC, FYN or YES. When tyrosine-phosphorylated, binds to the SH2 domain of host LCK, SRC, or FYN. Phosphorylated by host LCK, SRC and less efficiently by FYN.

The protein localises to the host cell membrane. In terms of biological role, transforms host T-cells, inducing T-cell lymphomia in the host. Activates at least SRC and LCK tyrosines kinases, thereby activating signaling pathway transforming host T-cells. Human T-cells transformed ex vivo display a IL2 indenpendent growth phenotype. This is Protein tio from Ateles (AtHV-3).